We begin with the raw amino-acid sequence, 192 residues long: Orotate phosphoribosyltransferase (192 aa).

Residues Arg84, Lys88, and 110-118 (DDVLTTGNS) contribute to the 5-phospho-alpha-D-ribose 1-diphosphate site. Thr114 and Arg142 together coordinate orotate.

The protein belongs to the purine/pyrimidine phosphoribosyltransferase family. PyrE subfamily. Homodimer. Requires Mg(2+) as cofactor.

It catalyses the reaction orotidine 5'-phosphate + diphosphate = orotate + 5-phospho-alpha-D-ribose 1-diphosphate. Its pathway is pyrimidine metabolism; UMP biosynthesis via de novo pathway; UMP from orotate: step 1/2. In terms of biological role, catalyzes the transfer of a ribosyl phosphate group from 5-phosphoribose 1-diphosphate to orotate, leading to the formation of orotidine monophosphate (OMP). This Pyrobaculum calidifontis (strain DSM 21063 / JCM 11548 / VA1) protein is Orotate phosphoribosyltransferase.